We begin with the raw amino-acid sequence, 119 residues long: Large ribosomal subunit protein uL22 (119 aa).

This sequence belongs to the universal ribosomal protein uL22 family. Part of the 50S ribosomal subunit.

In terms of biological role, this protein binds specifically to 23S rRNA; its binding is stimulated by other ribosomal proteins, e.g. L4, L17, and L20. It is important during the early stages of 50S assembly. It makes multiple contacts with different domains of the 23S rRNA in the assembled 50S subunit and ribosome. Functionally, the globular domain of the protein is located near the polypeptide exit tunnel on the outside of the subunit, while an extended beta-hairpin is found that lines the wall of the exit tunnel in the center of the 70S ribosome. This chain is Large ribosomal subunit protein uL22, found in Chlorobium luteolum (strain DSM 273 / BCRC 81028 / 2530) (Pelodictyon luteolum).